We begin with the raw amino-acid sequence, 393 residues long: Probable acetyl-CoA acetyltransferase (393 aa).

Catalysis depends on C88, which acts as the Acyl-thioester intermediate. Active-site proton acceptor residues include H348 and C378.

Belongs to the thiolase-like superfamily. Thiolase family.

Its subcellular location is the cytoplasm. The enzyme catalyses 2 acetyl-CoA = acetoacetyl-CoA + CoA. The protein is Probable acetyl-CoA acetyltransferase (yqeF) of Escherichia coli (strain K12).